The chain runs to 430 residues: Elongation factor 1-gamma (430 aa).

A GST N-terminal domain is found at 2-84; sequence VAGKLYTYPE…YVANETLRGS (83 aa). The GST C-terminal domain occupies 85–213; sequence SDLEKAQIIQ…FKLCEKAGEF (129 aa). Basic and acidic residues-rich tracts occupy residues 232–255 and 269–278; these read KTEK…KEQE and PKSKDPFDEM. Residues 232-278 form a disordered region; sequence KTEKAPKAVKAKPEKKEVPKKEQEEPADAAEEALAAEPKSKDPFDEM. The EF-1-gamma C-terminal domain occupies 271–430; that stretch reads SKDPFDEMPK…RKFNQGKIFK (160 aa).

In terms of assembly, EF-1 is composed of four subunits: alpha, beta, delta, and gamma.

In terms of biological role, probably plays a role in anchoring the complex to other cellular components. This Artemia salina (Brine shrimp) protein is Elongation factor 1-gamma.